A 1167-amino-acid polypeptide reads, in one-letter code: PH and Rap-GAP domain-containing protein DDB_G0271806 (1167 aa).

PH domains follow at residues Asn35–Leu140 and His165–Pro257. Residues Gly95–Ser160 form a disordered region. Residues Asn98–Thr155 show a composition bias toward low complexity. Disordered regions lie at residues Ser335–Leu361, Trp376–Val400, and Tyr645–Glu734. Residues Asn340 to Gln351 show a composition bias toward low complexity. The segment covering Ser648–Leu676 has biased composition (polar residues). Positions Glu687 to Glu732 are enriched in low complexity. Residues Leu950–Tyr1162 form the Rap-GAP domain.

The chain is PH and Rap-GAP domain-containing protein DDB_G0271806 from Dictyostelium discoideum (Social amoeba).